A 312-amino-acid polypeptide reads, in one-letter code: Dihydroorotate dehydrogenase B (NAD(+)), catalytic subunit (312 aa).

FMN is bound by residues serine 23 and lysine 47 to alanine 48. Substrate is bound by residues lysine 47 and asparagine 71 to leucine 75. Residues asparagine 102 and asparagine 130 each contribute to the FMN site. Asparagine 130 serves as a coordination point for substrate. Cysteine 133 acts as the Nucleophile in catalysis. FMN contacts are provided by lysine 168 and isoleucine 194. Substrate is bound at residue asparagine 195–threonine 196. Residues glycine 220, glycine 246–glycine 247, and glycine 268–threonine 269 each bind FMN.

Belongs to the dihydroorotate dehydrogenase family. Type 1 subfamily. In terms of assembly, heterotetramer of 2 PyrK and 2 PyrD type B subunits. FMN is required as a cofactor.

Its subcellular location is the cytoplasm. The enzyme catalyses (S)-dihydroorotate + NAD(+) = orotate + NADH + H(+). It functions in the pathway pyrimidine metabolism; UMP biosynthesis via de novo pathway; orotate from (S)-dihydroorotate (NAD(+) route): step 1/1. Functionally, catalyzes the conversion of dihydroorotate to orotate with NAD(+) as electron acceptor. This Enterococcus faecalis (strain ATCC 47077 / OG1RF) protein is Dihydroorotate dehydrogenase B (NAD(+)), catalytic subunit (pyrDB).